We begin with the raw amino-acid sequence, 207 residues long: Ribosome maturation factor RimP (207 aa).

Residues R171–H207 are disordered. A compositionally biased stretch (basic residues) spans K197 to H207.

Belongs to the RimP family.

The protein localises to the cytoplasm. Its function is as follows. Required for maturation of 30S ribosomal subunits. This Gluconacetobacter diazotrophicus (strain ATCC 49037 / DSM 5601 / CCUG 37298 / CIP 103539 / LMG 7603 / PAl5) protein is Ribosome maturation factor RimP.